The following is a 362-amino-acid chain: Hydroxycarboxylate dehydrogenase A (362 aa).

Zn(2+) contacts are provided by Asp-173, His-257, and His-274.

This sequence belongs to the iron-containing alcohol dehydrogenase family. Zn(2+) serves as cofactor.

The enzyme catalyses 2-hydroxybutanoate + NADP(+) = 2-oxobutanoate + NADPH + H(+). The catalysed reaction is 2-hydroxyglutarate + NADP(+) = 2-oxoglutarate + NADPH + H(+). Its function is as follows. Catalyzes the NADPH-dependent reduction of 2-oxoglutarate and 2-oxobutanoate, leading to the respective 2-hydroxycarboxylate. Cannot use NADH instead of NADPH as a redox partner. Do not catalyze the reverse reactions. The polypeptide is Hydroxycarboxylate dehydrogenase A (Escherichia coli (strain K12)).